The sequence spans 139 residues: Cell division protein SepF (139 aa).

The protein belongs to the SepF family. As to quaternary structure, homodimer. Interacts with FtsZ.

Its subcellular location is the cytoplasm. Functionally, cell division protein that is part of the divisome complex and is recruited early to the Z-ring. Probably stimulates Z-ring formation, perhaps through the cross-linking of FtsZ protofilaments. Its function overlaps with FtsA. This chain is Cell division protein SepF, found in Coprothermobacter proteolyticus (strain ATCC 35245 / DSM 5265 / OCM 4 / BT).